The following is a 380-amino-acid chain: Zinc finger protein neuro-d4 (380 aa).

The interval 132-164 (ALLDCQKPPPGDFAHDAEGDEMEDDAPRRKNKA) is disordered. The C2H2-type zinc finger occupies 190–213 (YVCDICGKRYKNRPGLSYHYTHTH). 2 consecutive PHD-type zinc fingers follow at residues 262 to 321 (EGPC…CKNC) and 318 to 368 (CKNC…CLRQ). Zn(2+) contacts are provided by C265, C268, C286, C289, H294, C297, C315, C318, C321, C324, C336, C339, H344, C347, C362, and C365.

The protein belongs to the requiem/DPF family. As to quaternary structure, component of neuron-specific chromatin remodeling complex (nBAF complex), a subfamily of ATP-dependent SWI/SNF chromatin remodeling complexes.

It localises to the cytoplasm. Its subcellular location is the nucleus. In terms of biological role, may have an important role in developing neurons by participating in regulation of cell survival, possibly as a neurospecific transcription factor. Belongs to the neuron-specific chromatin remodeling complex (nBAF complex) and plays a role in neural development. This is Zinc finger protein neuro-d4 from Gallus gallus (Chicken).